Consider the following 335-residue polypeptide: Holliday junction branch migration complex subunit RuvB (335 aa).

The interval 4 to 184 (ADRIISTSAK…FGIVQRLEFY (181 aa)) is large ATPase domain (RuvB-L). ATP-binding positions include Ile23, Arg24, Gly65, Lys68, Thr69, Thr70, 131–133 (EDY), Arg174, Tyr184, and Arg221. Position 69 (Thr69) interacts with Mg(2+). The segment at 185–255 (AVEDLTSIVA…SAKAALLMLD (71 aa)) is small ATPAse domain (RuvB-S). The tract at residues 258–335 (DAGFDYLDRK…RYFGLEKLTE (78 aa)) is head domain (RuvB-H). Positions 294, 313, and 318 each coordinate DNA.

It belongs to the RuvB family. In terms of assembly, homohexamer. Forms an RuvA(8)-RuvB(12)-Holliday junction (HJ) complex. HJ DNA is sandwiched between 2 RuvA tetramers; dsDNA enters through RuvA and exits via RuvB. An RuvB hexamer assembles on each DNA strand where it exits the tetramer. Each RuvB hexamer is contacted by two RuvA subunits (via domain III) on 2 adjacent RuvB subunits; this complex drives branch migration. In the full resolvosome a probable DNA-RuvA(4)-RuvB(12)-RuvC(2) complex forms which resolves the HJ.

It localises to the cytoplasm. It catalyses the reaction ATP + H2O = ADP + phosphate + H(+). In terms of biological role, the RuvA-RuvB-RuvC complex processes Holliday junction (HJ) DNA during genetic recombination and DNA repair, while the RuvA-RuvB complex plays an important role in the rescue of blocked DNA replication forks via replication fork reversal (RFR). RuvA specifically binds to HJ cruciform DNA, conferring on it an open structure. The RuvB hexamer acts as an ATP-dependent pump, pulling dsDNA into and through the RuvAB complex. RuvB forms 2 homohexamers on either side of HJ DNA bound by 1 or 2 RuvA tetramers; 4 subunits per hexamer contact DNA at a time. Coordinated motions by a converter formed by DNA-disengaged RuvB subunits stimulates ATP hydrolysis and nucleotide exchange. Immobilization of the converter enables RuvB to convert the ATP-contained energy into a lever motion, pulling 2 nucleotides of DNA out of the RuvA tetramer per ATP hydrolyzed, thus driving DNA branch migration. The RuvB motors rotate together with the DNA substrate, which together with the progressing nucleotide cycle form the mechanistic basis for DNA recombination by continuous HJ branch migration. Branch migration allows RuvC to scan DNA until it finds its consensus sequence, where it cleaves and resolves cruciform DNA. The protein is Holliday junction branch migration complex subunit RuvB of Pasteurella multocida (strain Pm70).